Here is a 164-residue protein sequence, read N- to C-terminus: Large ribosomal subunit protein eL24z (164 aa).

Residues glutamate 117–tyrosine 133 are compositionally biased toward basic and acidic residues. The segment at glutamate 117–arginine 164 is disordered.

Belongs to the eukaryotic ribosomal protein eL24 family. Interacts with the cauliflower mosaic virus transactivator TAV to form a TAV/60S complex. Interacts with REIL1 AND REIL2.

Its function is as follows. Might have an extraribosomal function in reinitiation of translation. This chain is Large ribosomal subunit protein eL24z (RPL24A), found in Arabidopsis thaliana (Mouse-ear cress).